The sequence spans 535 residues: Zinc finger protein squeeze (535 aa).

Composition is skewed to low complexity over residues 70–97 (MVME…HPPQ) and 131–142 (SSASGSGSNGSS). The tract at residues 70–157 (MVMEQQPHPD…RRGDGDQAKP (88 aa)) is disordered. Over residues 145–156 (EESRRGDGDQAK) the composition is skewed to basic and acidic residues. 5 consecutive C2H2-type zinc fingers follow at residues 158 to 180 (YKCG…TRIH), 186 to 208 (YRCE…IRTH), 214 to 238 (YKCR…SRCH), 244 to 266 (FKCN…IPKH), and 275 to 297 (HICN…LQKH). Thr-395 bears the Phosphothreonine mark. A phosphoserine mark is found at Ser-399 and Ser-401. The disordered stretch occupies residues 417–475 (TPQHHLQQQQQQQQQQQAQQQQQAQHQPSPGPGNSAFTPLSATVAPPPHLQQHRGPPGS). The span at 419 to 443 (QHHLQQQQQQQQQQQAQQQQQAQHQ) shows a compositional bias: low complexity. Ser-475 bears the Phosphoserine mark. Residues Tyr-479 and Tyr-481 each carry the phosphotyrosine modification.

The protein belongs to the krueppel C2H2-type zinc-finger protein family. Interacts with nab; which acts as a coactivator. Interacts with ap. In terms of tissue distribution, largely restricted to subsets of cells in the CNS throughout embryonic and first instar larval (L1) development. Expressed in a population of lateral interneurons, primarily projecting axons in the anterior and posterior commissures. Overlaps with ap within the thoracic ap cluster. By stage 17, it is restricted to 2 neurons within the ap-cluster, with one neuron typically continuing to display higher levels of expression. Selectively expressed at higher levels within the FMRFa Tv neurons. Expressed in all leucokinergic cells.

The protein resides in the nucleus. Transcription factor involved in neuronal fate specification. First required in embryonic CNS development to define the number of cells that express apterous (ap) in the ap thoracic cluster of interneurons. Later on, it plays a central role in the combinatorial code of transcription factors that specifies the fate of the Tv neuron in the ap cluster by participating in the transcription regulation of FMRFa in Tv cells. Also required for projection neuron dendritic targeting. This chain is Zinc finger protein squeeze (sqz), found in Drosophila melanogaster (Fruit fly).